The chain runs to 330 residues: MNNMIELRARNAILGAMVGDSLGSTFEFTKQKQAANKLAQYNYLSDGLIGKGPFGLKPGQFTDDTEIALAIMSVIHEYGYYDQYRVAEKYHEWYNSNPFDIGNTTKNSLSQNSCSDMIKASRKYNFGSMSNGSLMRLFGLVPMFYDRVPSSRTTKFIMKAIQQDIILTHSNPEMGPIAIIYGLMLWHAIQGHNASNVYKYGKLLAEKYHSDLYLSIYLSVDSEYDFFDYNDTRYHLNQIDSSNFGFVGFSIWLMLRSLKKHSDYRNAIIEIVSHGGDTDTNACITGALFGALYYNTIPSVWIDSVLNCQATERYQNYPIANPKIWSQWLP.

The protein belongs to the ADP-ribosylglycohydrolase family.

The sequence is that of Putative ADP-ribosyl glycohydrolase L543 from Acanthamoeba polyphaga mimivirus (APMV).